We begin with the raw amino-acid sequence, 226 residues long: N-acetyltransferase family 8 member 2 (226 aa).

2 helical membrane-spanning segments follow: residues 33–55 and 60–82; these read FYHV…TIIL and WLLA…WVSC. In terms of domain architecture, N-acetyltransferase spans 69 to 221; that stretch reads LFLLCLRLIF…FHFTYSLPSV (153 aa). Lys204 is subject to N6-acetyllysine.

This sequence belongs to the camello family.

Its subcellular location is the membrane. Functionally, probable acetyltransferase. Has no detectable histone acetyltransferase activity towards histone H3 or H4. This is N-acetyltransferase family 8 member 2 from Rattus norvegicus (Rat).